A 125-amino-acid chain; its full sequence is SKP1-like protein 7 (125 aa).

Residues 94-125 form an interaction with the F-box domain of F-box proteins region; sequence MNAAYDLHIKSLLALAYQTVADMVNDNKWAFE.

This sequence belongs to the SKP1 family. In terms of assembly, part of a SCF (SKP1-cullin-F-box) protein ligase complex. In terms of tissue distribution, restricted to siliques.

It is found in the nucleus. Its pathway is protein modification; protein ubiquitination. Functionally, involved in ubiquitination and subsequent proteasomal degradation of target proteins. Together with CUL1, RBX1 and a F-box protein, it forms a SCF E3 ubiquitin ligase complex. The functional specificity of this complex depends on the type of F-box protein. In the SCF complex, it serves as an adapter that links the F-box protein to CUL1. The chain is SKP1-like protein 7 (ASK7) from Arabidopsis thaliana (Mouse-ear cress).